A 92-amino-acid chain; its full sequence is Large ribosomal subunit protein bL34m (92 aa).

A mitochondrion-targeting transit peptide spans 1-46 (MALLAGSLLGPTSRSAALLGGRWLQPRAWLGFPDAWGLPTPQQARG). Polar residues predominate over residues 40–57 (TPQQARGKSRGNEYQPSN). The segment at 40–63 (TPQQARGKSRGNEYQPSNIKRKNK) is disordered. S71 carries the post-translational modification Phosphoserine.

The protein belongs to the bacterial ribosomal protein bL34 family. Component of the mitochondrial ribosome large subunit (39S) which comprises a 16S rRNA and about 50 distinct proteins.

It is found in the mitochondrion. This is Large ribosomal subunit protein bL34m (MRPL34) from Macaca fascicularis (Crab-eating macaque).